A 1299-amino-acid polypeptide reads, in one-letter code: DExH-box ATP-dependent RNA helicase DExH6 (1299 aa).

One can recognise an R3H domain in the interval 15–82; that stretch reads PTSVEATRIW…QRRLSIFKSR (68 aa). Positions 197-366 constitute a Helicase ATP-binding domain; that stretch reads TSAVESNQVI…FGGCPVVRVP (170 aa). Position 210–217 (210–217) interacts with ATP; it reads GETGCGKT. The DEIH box motif lies at 313–316; it reads DEIH. One can recognise a Helicase C-terminal domain in the interval 537-711; sequence LIQQLMRKIC…ELCLQVKILD (175 aa). 2 disordered regions span residues 987-1039 and 1175-1299; these read PTGS…MMSS and IPRQ…AEQK. The span at 992-1006 shows a compositional bias: acidic residues; sequence DSDDSNEEEEDDEEV. Low complexity predominate over residues 1007–1020; the sequence is AANTNEEVAANTNE. Positions 1023-1032 are enriched in basic and acidic residues; sequence MDIHKEESRR. 3 stretches are compositionally biased toward polar residues: residues 1176 to 1193, 1204 to 1214, and 1239 to 1251; these read PRQQNYKQRNPKATNNTD, NPTNRINQPEA, and PSDQAYGNKQHNT. Positions 1182–1200 match the Bipartite nuclear localization signal motif; the sequence is KQRNPKATNNTDSGKKKEK. Positions 1267–1283 match the Bipartite nuclear localization signal motif; it reads KKTKTRSGNNSDSGKKK. Residues 1279-1299 are compositionally biased toward basic and acidic residues; it reads SGKKKEQYIPKRQREDKAEQK.

It belongs to the DExH box helicase family. As to expression, specifically expressed in the tapetum and vascular tissues.

The protein resides in the nucleus. It carries out the reaction ATP + H2O = ADP + phosphate + H(+). Its function is as follows. May function as an ATP-dependent RNA/DNA helicase. This is DExH-box ATP-dependent RNA helicase DExH6 from Arabidopsis thaliana (Mouse-ear cress).